We begin with the raw amino-acid sequence, 855 residues long: DNA mismatch repair protein MutS (855 aa).

621-628 serves as a coordination point for ATP; that stretch reads GPNMGGKS.

It belongs to the DNA mismatch repair MutS family.

Functionally, this protein is involved in the repair of mismatches in DNA. It is possible that it carries out the mismatch recognition step. This protein has a weak ATPase activity. The sequence is that of DNA mismatch repair protein MutS from Francisella tularensis subsp. holarctica (strain OSU18).